Reading from the N-terminus, the 290-residue chain is MLREYKLVVVGGGGVGKSALTIQLIQSHFVDEYDPTIEDSYRKQCTIDDQQVLLDVLDTAGQEEYSAMREQYMRTGEGFLLVYSINSLNSFQELNSFYDQILRVKDSDNVPVLVVGNKCDLEMERQVSYEDGLALANSFNCPFLETSAKQRINVEEAFYGLVRNINQYNAKIAEAEKQQQQQQQQQNANQQGQDQYGQQKDNQQSQFNNQINNNNNTSAVNGGVSSDGIIDQNGNGGVSSGQANLPNQSQSQSQRQQQQQQQEPQQQSENQFSGQKQSSSKSKNGCCVIV.

G11–S18 serves as a coordination point for GTP. The Effector region signature appears at Y33–Y41. GTP is bound by residues D58–Q62 and N117–D120. The tract at residues E176–V290 is disordered. Low complexity-rich tracts occupy residues Q178–N216 and P246–K283. Residue C286 is the site of S-palmitoyl cysteine attachment. A Cysteine methyl ester modification is found at C287. C287 carries the S-farnesyl cysteine lipid modification. Positions V288–V290 are cleaved as a propeptide — removed in mature form.

The protein belongs to the small GTPase superfamily. Ras family.

It is found in the cell membrane. With respect to regulation, alternates between an inactive form bound to GDP and an active form bound to GTP. Activated by a guanine nucleotide-exchange factor (GEF) and inactivated by a GTPase-activating protein (GAP). Its function is as follows. Required for the regulation of both a MAP kinase signaling pathway and a cAMP signaling pathway. The activation of these pathways contributes to the pathogenicity of the cells through the induction of the morphological transition from the yeast to the polarized filamentous form. This chain is Ras-like protein 1 (RAS1), found in Candida albicans (strain SC5314 / ATCC MYA-2876) (Yeast).